Reading from the N-terminus, the 129-residue chain is uncharacterized protein (129 aa).

Acidic residues predominate over residues 86-96; it reads NDGFSSDDEPE. The interval 86-129 is disordered; that stretch reads NDGFSSDDEPEEHVILTEDNQGEPSETPQATFDITEFIKTEDED. A compositionally biased stretch (polar residues) spans 103 to 117; it reads EDNQGEPSETPQATF.

This sequence belongs to the asfivirus D129L family.

This is an uncharacterized protein from African swine fever virus (isolate Tick/South Africa/Pretoriuskop Pr4/1996) (ASFV).